The following is a 275-amino-acid chain: Pyrroline-5-carboxylate reductase (275 aa).

The protein belongs to the pyrroline-5-carboxylate reductase family.

The protein localises to the cytoplasm. The catalysed reaction is L-proline + NADP(+) = (S)-1-pyrroline-5-carboxylate + NADPH + 2 H(+). It catalyses the reaction L-proline + NAD(+) = (S)-1-pyrroline-5-carboxylate + NADH + 2 H(+). It participates in amino-acid biosynthesis; L-proline biosynthesis; L-proline from L-glutamate 5-semialdehyde: step 1/1. Functionally, catalyzes the reduction of 1-pyrroline-5-carboxylate (PCA) to L-proline. This Pasteurella multocida (strain Pm70) protein is Pyrroline-5-carboxylate reductase.